The chain runs to 535 residues: Phosphoenolpyruvate carboxykinase (ATP) (535 aa).

Positions 59, 201, and 207 each coordinate substrate. ATP-binding positions include K207, H226, and 243–251 (GLSGTGKTT). Mn(2+) is bound by residues K207 and H226. D264 contacts Mn(2+). ATP-binding positions include E292, R328, 444–445 (RI), and T450. R328 lines the substrate pocket.

Belongs to the phosphoenolpyruvate carboxykinase (ATP) family. It depends on Mn(2+) as a cofactor.

The protein resides in the cytoplasm. The catalysed reaction is oxaloacetate + ATP = phosphoenolpyruvate + ADP + CO2. Its pathway is carbohydrate biosynthesis; gluconeogenesis. Functionally, involved in the gluconeogenesis. Catalyzes the conversion of oxaloacetate (OAA) to phosphoenolpyruvate (PEP) through direct phosphoryl transfer between the nucleoside triphosphate and OAA. This Porphyromonas gingivalis (strain ATCC BAA-308 / W83) protein is Phosphoenolpyruvate carboxykinase (ATP).